The chain runs to 250 residues: Endonuclease NucS 2 (250 aa).

This sequence belongs to the NucS endonuclease family.

It localises to the cytoplasm. Cleaves both 3' and 5' ssDNA extremities of branched DNA structures. The protein is Endonuclease NucS 2 of Halobacterium salinarum (strain ATCC 700922 / JCM 11081 / NRC-1) (Halobacterium halobium).